Consider the following 27-residue polypeptide: Weak neurotoxin E3 (27 aa).

Expressed by the venom gland.

It is found in the secreted. In terms of biological role, binds to muscle nicotinic acetylcholine receptor (nAChR) and inhibit acetylcholine from binding to the receptor, thereby impairing neuromuscular transmission. This Micrurus pyrrhocryptus (Coral snake) protein is Weak neurotoxin E3.